A 398-amino-acid chain; its full sequence is Cysteine protease ATG4A (398 aa).

C77 serves as the catalytic Nucleophile. Active-site residues include D279 and H281. The short motif at 393 to 396 (FEIL) is the LIR element.

It belongs to the peptidase C54 family. As to quaternary structure, interacts with ATG9A; the interaction is direct.

It localises to the cytoplasm. The enzyme catalyses [protein]-C-terminal L-amino acid-glycyl-phosphatidylethanolamide + H2O = [protein]-C-terminal L-amino acid-glycine + a 1,2-diacyl-sn-glycero-3-phosphoethanolamine. With respect to regulation, inhibited by N-ethylmaleimide. Redox-regulated during autophagy since reducing conditions activate ATG4A whereas an oxidizing environment such as the presence of H(2)O(2) inhibits its activity. In terms of biological role, cysteine protease that plays a key role in autophagy by mediating both proteolytic activation and delipidation of ATG8 family proteins. The protease activity is required for proteolytic activation of ATG8 family proteins: cleaves the C-terminal amino acid of ATG8 proteins to reveal a C-terminal glycine. Exposure of the glycine at the C-terminus is essential for ATG8 proteins conjugation to phosphatidylethanolamine (PE) and insertion to membranes, which is necessary for autophagy. Preferred substrate is GABARAPL2 followed by MAP1LC3A and GABARAP. Protease activity is also required to counteract formation of high-molecular weight conjugates of ATG8 proteins (ATG8ylation): acts as a deubiquitinating-like enzyme that removes ATG8 conjugated to other proteins, such as ATG3. In addition to the protease activity, also mediates delipidation of ATG8 family proteins. Catalyzes delipidation of PE-conjugated forms of ATG8 proteins during macroautophagy. Compared to ATG4B, the major protein for proteolytic activation of ATG8 proteins, shows weaker ability to cleave the C-terminal amino acid of ATG8 proteins, while it displays stronger delipidation activity. Involved in phagophore growth during mitophagy independently of its protease activity and of ATG8 proteins: acts by regulating ATG9A trafficking to mitochondria and promoting phagophore-endoplasmic reticulum contacts during the lipid transfer phase of mitophagy. (Microbial infection) Mediates cleavage of an ATG8 protein homolog coded in the genome of cytopathogenic bovine viral diarrhea virus (BVDV). This chain is Cysteine protease ATG4A, found in Bos taurus (Bovine).